Consider the following 321-residue polypeptide: Malate dehydrogenase (321 aa).

NAD(+) contacts are provided by residues 10–15 and D34; that span reads GSGMIG. R83 and R89 together coordinate substrate. Residues N96 and 119 to 121 each bind NAD(+); that span reads ITN. Substrate is bound by residues N121 and R152. H176 serves as the catalytic Proton acceptor.

This sequence belongs to the LDH/MDH superfamily. MDH type 3 family.

It catalyses the reaction (S)-malate + NAD(+) = oxaloacetate + NADH + H(+). In terms of biological role, catalyzes the reversible oxidation of malate to oxaloacetate. The sequence is that of Malate dehydrogenase from Bartonella bacilliformis (strain ATCC 35685 / KC583 / Herrer 020/F12,63).